The primary structure comprises 349 residues: tRNA pseudouridine synthase D (349 aa).

Residue Phe27 coordinates substrate. The active-site Nucleophile is the Asp80. Residue Asn129 participates in substrate binding. Positions 155 to 303 constitute a TRUD domain; sequence GVPNYFGAQR…VEASRRAMLL (149 aa). Phe329 provides a ligand contact to substrate.

This sequence belongs to the pseudouridine synthase TruD family.

It carries out the reaction uridine(13) in tRNA = pseudouridine(13) in tRNA. In terms of biological role, responsible for synthesis of pseudouridine from uracil-13 in transfer RNAs. The sequence is that of tRNA pseudouridine synthase D from Salmonella newport (strain SL254).